Here is a 248-residue protein sequence, read N- to C-terminus: Probable transcriptional regulatory protein Acid345_2125 (248 aa).

This sequence belongs to the TACO1 family.

It localises to the cytoplasm. The sequence is that of Probable transcriptional regulatory protein Acid345_2125 from Koribacter versatilis (strain Ellin345).